The following is a 396-amino-acid chain: MTVRLILAKGREKSLLRRHPWIFSGAVQRLEGDALSGETIDILDSQGKWLARAAYSPESQILARVWTFQQDEVIDCAFFIRRLQQAQNWRDWLAQRDGLNGYRLIAGESDGLPGITIDRFQNFLVLQLLSAGAEYQRETLVSALQHCYPECSIYDRSDVSVRKKEGLPLTQGLICGEMPPALLPISENGMQLFVDIQQGHKTGFYLDQRDSRLAARNYANGRRVLNCFSYTGAFAVAALMGNCQQVISVDTSQSVLDIAKQNIELNQLDLSKTEFVRDDVFQLLRSYRAQGEKFDLIIMDPPKFVENKSQLASACRGYKDINMLAIQLLRPGGILLSFSCSGLMPVDLFQKILADAALDAGHDIQFIEQFRQAADHPVIAAYPEGLYLKGFACRIM.

In terms of domain architecture, PUA spans 2–81; that stretch reads TVRLILAKGR…EVIDCAFFIR (80 aa).

The protein belongs to the methyltransferase superfamily. RlmI family.

It is found in the cytoplasm. It catalyses the reaction cytidine(1962) in 23S rRNA + S-adenosyl-L-methionine = 5-methylcytidine(1962) in 23S rRNA + S-adenosyl-L-homocysteine + H(+). Functionally, specifically methylates the cytosine at position 1962 (m5C1962) of 23S rRNA. The protein is Ribosomal RNA large subunit methyltransferase I of Yersinia pseudotuberculosis serotype O:1b (strain IP 31758).